Consider the following 345-residue polypeptide: Phosphoribosylformylglycinamidine cyclo-ligase (345 aa).

It belongs to the AIR synthase family.

The protein localises to the cytoplasm. It carries out the reaction 2-formamido-N(1)-(5-O-phospho-beta-D-ribosyl)acetamidine + ATP = 5-amino-1-(5-phospho-beta-D-ribosyl)imidazole + ADP + phosphate + H(+). It participates in purine metabolism; IMP biosynthesis via de novo pathway; 5-amino-1-(5-phospho-D-ribosyl)imidazole from N(2)-formyl-N(1)-(5-phospho-D-ribosyl)glycinamide: step 2/2. The chain is Phosphoribosylformylglycinamidine cyclo-ligase from Escherichia coli O139:H28 (strain E24377A / ETEC).